The primary structure comprises 335 residues: MTVTATERIVTVFGTGNQAGAVARALLADKTSQFKVRAISRHPDSASSRTLSALGVQVVKADGWNLEELTRAFADTWAAFVNTNSDDPLFLQKGDGPTEFDLGKNIIDSLVAAKVQHLVYSCFASSVEQTKGKLFIKPMEMKYQALKYARETGHFATTCGIYAAWYYEQFLDKATADVFGGFPTTPDEEGYITFRAPLWGDDEHPSFVSITHDFGDMVHGILLEPEQWDGKSVPAASDVMTFEQLAQTLQNATGRKSRYIPLPSWEDFGRGIPELDDHKLLFAFTQATGGRYFGDVPTETKTALRLKRRAAEAQGKSGNEANLLSMEEWFKTNFA.

NADP(+)-binding positions include Gly14–Gln18, Arg41–Ser45, Asp62–Gly63, Thr83–Ser85, Lys142, and Tyr166–Gln169.

Belongs to the NmrA-type oxidoreductase family.

It functions in the pathway secondary metabolite biosynthesis. NmrA-like family domain-containing oxidoreductase; part of the lnb gene cluster that mediates the biosynthesis of diastereomeric piperazines. Lna and lnb clusters encode sets of enzymes that produce overlapping sets of previously undescribed metabolites such as piperazinomycin-like metabolites or morpholine. The lna and lnb biosynthetic pathways appear to be part of a signaling network that controls the formation of sclerotia, a resilient overwintering structure. One primary function of the non-canonical nonribosomal peptide synthetases lnaA and lnbA consists in the reduction of L-tyrosine. The presence in the clusters of tailoring enzymes such as the oxidoreductases lnaB, lnbB, lnaE or lnbE, as well as of the cytochrome P450 monooxygenases lnaC, lnaD, or lnbC, might explain formation of various diastereomeric piperazines. The polypeptide is NmrA-like family domain-containing oxidoreductase lnbB (Aspergillus flavus (strain ATCC 200026 / FGSC A1120 / IAM 13836 / NRRL 3357 / JCM 12722 / SRRC 167)).